The chain runs to 1163 residues: Protein phosphatase 1 regulatory subunit 26 (1163 aa).

Residues 65–83 (HERLTQRGQRAERSRDTRL) show a composition bias toward basic and acidic residues. Disordered regions lie at residues 65 to 91 (HERLTQRGQRAERSRDTRLAPKPAVCK), 144 to 253 (RGGA…TSAR), 266 to 393 (RKPP…KKKL), 463 to 496 (APMEGSDRPPSRNPLFCPQPMPPRSEGDSSNIDS), 514 to 653 (VGSP…DEDL), 672 to 929 (RDPR…TATA), and 1073 to 1163 (TQPG…GLKL). 2 stretches are compositionally biased toward polar residues: residues 163–179 (HSSTLPIPCPSQLTPGS) and 189–201 (DQGSTSPASMSSE). The span at 208-236 (IRAEIEQFLNEKRQHENPKCDGFVDKKSD) shows a compositional bias: basic and acidic residues. The segment covering 273–297 (KMSTQQRNFQPKPTTEPETPVSTKL) has biased composition (polar residues). Basic residues predominate over residues 315–324 (MPARRSKRIR). Residues 515–535 (GSPQPAQGPLSSPGPSGQPGI) show a composition bias toward low complexity. 2 stretches are compositionally biased toward basic and acidic residues: residues 566-581 (KIREGRESTQDADHIQ) and 634-645 (ATEKESSEDKSS). Over residues 672–682 (RDPRASCKKVR) the composition is skewed to basic residues. Over residues 766–780 (TGASGHPPSASSPTS) the composition is skewed to low complexity. The segment covering 783–792 (SAVDSDDSIE) has biased composition (acidic residues). Composition is skewed to basic and acidic residues over residues 793-808 (LEIRRFLAEKAKESIR) and 850-859 (EGRRGPERAR). Polar residues predominate over residues 860 to 871 (TQATGLLSQSGK). Over residues 901 to 910 (SSAKASPPSR) the composition is skewed to low complexity. Positions 1105–1131 (QQDRRNSASEDKVLDLRYRHRVDREPQ) are enriched in basic and acidic residues. Phosphoserine is present on S1111. 2 stretches are compositionally biased toward polar residues: residues 1133–1146 (QETLGSDASEFSDT) and 1154–1163 (ATVSSKGLKL).

As to quaternary structure, interacts with UTP20 and PPP1CA.

The protein localises to the nucleus. It localises to the nucleolus. Inhibits phosphatase activity of protein phosphatase 1 (PP1) complexes. May positively regulate cell proliferation. The chain is Protein phosphatase 1 regulatory subunit 26 (Ppp1r26) from Mus musculus (Mouse).